The following is a 456-amino-acid chain: Hydroxymethylglutaryl coenzyme A synthase (456 aa).

Alanine 34 is a (3S)-3-hydroxy-3-methylglutaryl-CoA binding site. Glutamate 85 functions as the Proton donor/acceptor in the catalytic mechanism. (3S)-3-hydroxy-3-methylglutaryl-CoA is bound by residues cysteine 119, threonine 161, serine 211, histidine 258, lysine 267, asparagine 335, and serine 369. The active-site Acyl-thioester intermediate is the cysteine 119. The Proton donor/acceptor role is filled by histidine 258.

This sequence belongs to the thiolase-like superfamily. HMG-CoA synthase family.

It carries out the reaction acetoacetyl-CoA + acetyl-CoA + H2O = (3S)-3-hydroxy-3-methylglutaryl-CoA + CoA + H(+). HMG-CoA synthase; part of the gene cluster that mediates the biosynthesis of 1233A, a natural compound known as an inhibitor of HMG-CoA synthase in the mevalonate pathway and with antibacterial and antifungal activities. This enzyme condenses acetyl-CoA with acetoacetyl-CoA to form HMG-CoA, which is the substrate for HMG-CoA reductase. As part of the 1233A biosynthesis cluster, is involved in conferring self-resistance to 1233A. In Fusarium sp, this protein is Hydroxymethylglutaryl coenzyme A synthase.